The sequence spans 146 residues: UPF0735 ACT domain-containing protein Cphy_3604 (146 aa).

The 76-residue stretch at 70–145 (TFMLQMDDIP…GIHYLKILGR (76 aa)) folds into the ACT domain.

This sequence belongs to the UPF0735 family.

The protein is UPF0735 ACT domain-containing protein Cphy_3604 of Lachnoclostridium phytofermentans (strain ATCC 700394 / DSM 18823 / ISDg) (Clostridium phytofermentans).